Consider the following 444-residue polypeptide: UDP-N-acetylmuramoylalanine--D-glutamate ligase (444 aa).

113–119 serves as a coordination point for ATP; the sequence is GSNGKST.

Belongs to the MurCDEF family.

It localises to the cytoplasm. The catalysed reaction is UDP-N-acetyl-alpha-D-muramoyl-L-alanine + D-glutamate + ATP = UDP-N-acetyl-alpha-D-muramoyl-L-alanyl-D-glutamate + ADP + phosphate + H(+). It functions in the pathway cell wall biogenesis; peptidoglycan biosynthesis. Its function is as follows. Cell wall formation. Catalyzes the addition of glutamate to the nucleotide precursor UDP-N-acetylmuramoyl-L-alanine (UMA). The protein is UDP-N-acetylmuramoylalanine--D-glutamate ligase of Blochmanniella floridana.